A 359-amino-acid polypeptide reads, in one-letter code: GTP 3',8-cyclase (359 aa).

The Radical SAM core domain maps to 33–260; sequence RFGRRHDSLR…PTGRENPSAP (228 aa). Arg42 serves as a coordination point for GTP. [4Fe-4S] cluster-binding residues include Cys49 and Cys53. Tyr55 is a binding site for S-adenosyl-L-methionine. Residue Cys56 coordinates [4Fe-4S] cluster. Arg93 lines the GTP pocket. Gly97 is a binding site for S-adenosyl-L-methionine. Thr124 provides a ligand contact to GTP. Ser148 is an S-adenosyl-L-methionine binding site. Lys185 contributes to the GTP binding site. Met219 serves as a coordination point for S-adenosyl-L-methionine. [4Fe-4S] cluster is bound by residues Cys286 and Cys289. 291 to 293 contacts GTP; it reads RLR. Cys303 lines the [4Fe-4S] cluster pocket.

The protein belongs to the radical SAM superfamily. MoaA family. In terms of assembly, monomer and homodimer. Requires [4Fe-4S] cluster as cofactor.

It catalyses the reaction GTP + AH2 + S-adenosyl-L-methionine = (8S)-3',8-cyclo-7,8-dihydroguanosine 5'-triphosphate + 5'-deoxyadenosine + L-methionine + A + H(+). Its pathway is cofactor biosynthesis; molybdopterin biosynthesis. Its function is as follows. Catalyzes the cyclization of GTP to (8S)-3',8-cyclo-7,8-dihydroguanosine 5'-triphosphate. This chain is GTP 3',8-cyclase, found in Rhodopirellula baltica (strain DSM 10527 / NCIMB 13988 / SH1).